A 433-amino-acid polypeptide reads, in one-letter code: Serine carboxypeptidase-like 8 (433 aa).

The first 19 residues, 1–19, serve as a signal peptide directing secretion; it reads MSLKIKFLLLLVLYHHVDS. Cystine bridges form between Cys78–Cys323, Cys241–Cys255, and Cys279–Cys289. Asn99 is a glycosylation site (N-linked (GlcNAc...) asparagine). Ser173 is a catalytic residue. Asn283, Asn324, and Asn342 each carry an N-linked (GlcNAc...) asparagine glycan. Catalysis depends on residues Asp358 and His411. Residue Asn418 is glycosylated (N-linked (GlcNAc...) asparagine).

It belongs to the peptidase S10 family. Post-translationally, N-glycosylated. Highly expressed in seedlings. Expressed in leaves, stems, flowers and siliques, and at low levels in roots.

The protein resides in the vacuole. The catalysed reaction is 1-O-(trans-sinapoyl)-beta-D-glucose + (S)-malate = sinapoyl (S)-malate + D-glucose. It catalyses the reaction 2 1-O-(trans-sinapoyl)-beta-D-glucose = 1,2-di-O-sinapoyl beta-D-glucose + D-glucose. With respect to regulation, 95% inhibition by diisopropyl fluorophosphate (DFP) and 30% by phenylmethylsulfonyl fluoride (PMSF). Its function is as follows. Involved in plants secondary metabolism. Functions as acyltransferase to form the sinapate ester sinapoylmalate. Also capable of catalyzing the formation of 1,2-bis-O-sinapoyl beta-D-glucoside. This chain is Serine carboxypeptidase-like 8, found in Arabidopsis thaliana (Mouse-ear cress).